Here is a 517-residue protein sequence, read N- to C-terminus: L-amino-acid oxidase (517 aa).

The first 18 residues, 1–18, serve as a signal peptide directing secretion; it reads MNVFFMFSLLFLAALGSC. Cysteine 29 and cysteine 192 form a disulfide bridge. FAD-binding positions include 62 to 63, 82 to 83, arginine 90, and 106 to 109; these read MA, EA, and GPMR. A substrate-binding site is contributed by arginine 109. N-linked (GlcNAc...) asparagine glycosylation occurs at asparagine 191. Valine 280 is an FAD binding site. Residues cysteine 350 and cysteine 431 are joined by a disulfide bond. Tyrosine 391 contributes to the substrate binding site. Residues glutamate 476 and 483-488 contribute to the FAD site; that span reads GWLDST. 483 to 484 is a binding site for substrate; sequence GW.

Belongs to the flavin monoamine oxidase family. FIG1 subfamily. In terms of assembly, homodimer; non-covalently linked. Requires FAD as cofactor. In terms of processing, N-glycosylated. In terms of tissue distribution, expressed by the venom gland.

It localises to the secreted. It carries out the reaction an L-alpha-amino acid + O2 + H2O = a 2-oxocarboxylate + H2O2 + NH4(+). Functionally, catalyzes an oxidative deamination of predominantly hydrophobic and aromatic L-amino acids, thus producing hydrogen peroxide that may contribute to the diverse toxic effects of this enzyme. Exhibits diverse biological activities, such as hemorrhage, hemolysis, edema, apoptosis of vascular endothelial cells or tumor cell lines, antiparasitic activities, as well as regulation of platelet aggregation. Effects of snake L-amino oxidases on platelets are controversial, since they either induce aggregation or inhibit agonist-induced aggregation. These different effects are probably due to different experimental conditions. This protein has antibacterial activities. This Pseudechis australis (Mulga snake) protein is L-amino-acid oxidase.